We begin with the raw amino-acid sequence, 235 residues long: Small ribosomal subunit protein uS2c (235 aa).

This sequence belongs to the universal ribosomal protein uS2 family.

It is found in the plastid. The protein localises to the chloroplast. This chain is Small ribosomal subunit protein uS2c (rps2), found in Cryptomeria japonica (Japanese cedar).